A 587-amino-acid polypeptide reads, in one-letter code: Nucleoporin ndc-1 (587 aa).

The Cytoplasmic portion of the chain corresponds to 1-79; the sequence is MMGENSSAYT…FHSEIDVRKK (79 aa). Residues 32–55 form a disordered region; it reads ASTSATSSPNLRKSPNRGFSSPRA. A helical membrane pass occupies residues 80-100; it reads LASFVCGAAVALSFIVTVSIL. Residues 101 to 121 lie on the Perinuclear space side of the membrane; that stretch reads KLSIWAPFSSVQDSLTWWLYP. A helical transmembrane segment spans residues 122–142; that stretch reads TSWPVTLFIWLSSVAWTFLII. Residues 143-161 lie on the Cytoplasmic side of the membrane; that stretch reads HQFCTVTQVPRIPITDTYA. A helical membrane pass occupies residues 162-182; sequence WAGAALEFVHRLIFVYTAFTV. Topologically, residues 183 to 187 are perinuclear space; sequence SESSF. A helical transmembrane segment spans residues 188-208; sequence FEDFAWIAIAFSVAISSALVI. The Cytoplasmic portion of the chain corresponds to 209–255; sequence FRSDFHLNFSNVQVNSFKTLIDFAKSLPYGSLAETSGVDAAIAYTAA. A helical transmembrane segment spans residues 256–276; sequence MALTVFGSPLLWGFSAWWLLI. Topologically, residues 277–281 are perinuclear space; sequence NIQFH. The helical transmembrane segment at 282–302 threads the bilayer; that stretch reads LVLFGVCFAQQFFAKIFMKIV. The Cytoplasmic segment spans residues 303–587; sequence NQIVMKPMKF…TIKLVCAEEI (285 aa).

It belongs to the NDC1 family.

The protein resides in the nucleus. It is found in the nuclear pore complex. It localises to the nucleus membrane. Its function is as follows. Component of the nuclear pore complex (NPC), which plays a key role in de novo assembly and insertion of NPC in the nuclear envelope. The protein is Nucleoporin ndc-1 (npp-22) of Caenorhabditis briggsae.